Consider the following 66-residue polypeptide: Large ribosomal subunit protein bL33c (66 aa).

Belongs to the bacterial ribosomal protein bL33 family.

Its subcellular location is the plastid. It is found in the chloroplast. The protein is Large ribosomal subunit protein bL33c of Acorus calamus (Sweet flag).